Reading from the N-terminus, the 309-residue chain is Maintenance of mitochondrial morphology protein 1 (309 aa).

Topologically, residues 1-16 (MGNAYIFSLQPTFTQG) are lumenal. The chain crosses the membrane as a helical span at residues 17-37 (LILGQFSILFLLVLVLKYLFF). Over 38-309 (DTVSDHAYRT…EQQAGELPVN (272 aa)) the chain is Cytoplasmic. The SMP-LTD domain occupies 84-293 (ECESADWLNA…LPGLASVSEV (210 aa)).

Belongs to the MMM1 family. As to quaternary structure, homodimer. Component of the ER-mitochondria encounter structure (ERMES) or MDM complex, composed of MMM1, MDM10, MDM12 and MDM34. An MMM1 homodimer associates with one molecule of MDM12 on each side in a pairwise head-to-tail manner, and the SMP-LTD domains of MMM1 and MDM12 generate a continuous hydrophobic tunnel for phospholipid trafficking.

The protein localises to the endoplasmic reticulum membrane. Its function is as follows. Component of the ERMES/MDM complex, which serves as a molecular tether to connect the endoplasmic reticulum (ER) and mitochondria. Components of this complex are involved in the control of mitochondrial shape and protein biogenesis, and function in nonvesicular lipid trafficking between the ER and mitochondria. The MDM12-MMM1 subcomplex functions in the major beta-barrel assembly pathway that is responsible for biogenesis of all outer membrane beta-barrel proteins, and acts in a late step after the SAM complex. The MDM10-MDM12-MMM1 subcomplex further acts in the TOM40-specific pathway after the action of the MDM12-MMM1 complex. Essential for establishing and maintaining the structure of mitochondria and maintenance of mtDNA nucleoids. The sequence is that of Maintenance of mitochondrial morphology protein 1 from Postia placenta (strain ATCC 44394 / Madison 698-R) (Brown rot fungus).